The primary structure comprises 783 residues: Protein transport protein SEC23 B (783 aa).

Zn(2+) contacts are provided by C59, C62, C81, and C84. The zinc finger-like stretch occupies residues 59–84; the sequence is CRICTAALNPFARVDFLAKIWICPIC.

The protein belongs to the SEC23/SEC24 family. SEC23 subfamily. As to quaternary structure, component of the coat protein complex II (COPII), composed of at least five proteins: the Sec23/24 complex, the Sec13/31 complex and Sar1. Interacts with SEC24A.

Its subcellular location is the cytoplasmic vesicle. The protein localises to the COPII-coated vesicle membrane. It localises to the endoplasmic reticulum membrane. It is found in the membrane. Its function is as follows. Component of the coat protein complex II (COPII) which promotes the formation of transport vesicles from the endoplasmic reticulum (ER). The coat has two main functions, the physical deformation of the endoplasmic reticulum membrane into vesicles and the selection of cargo molecules. The polypeptide is Protein transport protein SEC23 B (Arabidopsis thaliana (Mouse-ear cress)).